Reading from the N-terminus, the 313-residue chain is Foldase protein PrsA (313 aa).

An N-terminal signal peptide occupies residues 1–20; it reads MKKKLLAGAITLLSVATLAA. A lipid anchor (N-palmitoyl cysteine) is attached at cysteine 21. Cysteine 21 carries S-diacylglycerol cysteine lipidation. Residues 143–241 form the PpiC domain; that stretch reads TPDVTAQIIR…SQYYIVKLTK (99 aa).

The protein belongs to the PrsA family.

Its subcellular location is the cell membrane. The catalysed reaction is [protein]-peptidylproline (omega=180) = [protein]-peptidylproline (omega=0). In terms of biological role, plays a major role in protein secretion by helping the post-translocational extracellular folding of several secreted proteins. The protein is Foldase protein PrsA of Streptococcus pneumoniae (strain ATCC BAA-255 / R6).